Reading from the N-terminus, the 369-residue chain is Protein FAM187B (369 aa).

Residues 1-17 (MPPMLWLLLNFAAPALG) form the signal peptide. The Extracellular segment spans residues 18–333 (FYFSISCPSG…PGRADSVLKG (316 aa)). N-linked (GlcNAc...) asparagine glycans are attached at residues N45, N68, and N130. The chain crosses the membrane as a helical span at residues 334–354 (LKLVLLVGTVLVLLGALLKFI). The Cytoplasmic portion of the chain corresponds to 355 to 369 (RPSPGKRSKQVLMVK).

It belongs to the FAM187 family.

The protein resides in the membrane. The sequence is that of Protein FAM187B (FAM187B) from Macaca fascicularis (Crab-eating macaque).